The primary structure comprises 74 residues: Large ribosomal subunit protein uL29 (74 aa).

It belongs to the universal ribosomal protein uL29 family.

This is Large ribosomal subunit protein uL29 (rpmC) from Streptomyces coelicolor (strain ATCC BAA-471 / A3(2) / M145).